Consider the following 300-residue polypeptide: MKQITIASRESKLALWQTNFVKNRIQSELNIPCEISTMKTQGDIILDQPLNKIGGKALFMKELEVAMLSNKADIAVHSLKDVPYQLPQGFCLAGFMPREDPRDAFVSNKYNSIDDLPKGAVVGTSSLRRKAQLLHYRDDLEIRDLRGNIQTRLSKLDNGDYDAIILASAGLIRLELVERITQFIPVEISLPAVGQGIVVIEALERDNDLLEKIQKLNCRESSRVATAERAFNQELKGGCHVAIGAYAELDNNQITLMAMVASSDGKKILKRKMIGDDPTKLGKLLAQEMIALGAYKILES.

Cys-239 bears the S-(dipyrrolylmethanemethyl)cysteine mark.

It belongs to the HMBS family. In terms of assembly, monomer. Dipyrromethane is required as a cofactor.

It catalyses the reaction 4 porphobilinogen + H2O = hydroxymethylbilane + 4 NH4(+). It participates in porphyrin-containing compound metabolism; protoporphyrin-IX biosynthesis; coproporphyrinogen-III from 5-aminolevulinate: step 2/4. Tetrapolymerization of the monopyrrole PBG into the hydroxymethylbilane pre-uroporphyrinogen in several discrete steps. The protein is Porphobilinogen deaminase of Francisella tularensis subsp. holarctica (strain FTNF002-00 / FTA).